A 262-amino-acid polypeptide reads, in one-letter code: Type III pantothenate kinase (262 aa).

9-16 contributes to the ATP binding site; sequence DIGNTNVK. Residues Tyr-103 and 110-113 each bind substrate; that span reads GADR. Asp-112 serves as the catalytic Proton acceptor. Position 134 (Asp-134) interacts with K(+). Thr-137 is a binding site for ATP. A substrate-binding site is contributed by Thr-190.

Belongs to the type III pantothenate kinase family. In terms of assembly, homodimer. The cofactor is NH4(+). K(+) serves as cofactor.

The protein resides in the cytoplasm. The catalysed reaction is (R)-pantothenate + ATP = (R)-4'-phosphopantothenate + ADP + H(+). It functions in the pathway cofactor biosynthesis; coenzyme A biosynthesis; CoA from (R)-pantothenate: step 1/5. In terms of biological role, catalyzes the phosphorylation of pantothenate (Pan), the first step in CoA biosynthesis. This chain is Type III pantothenate kinase, found in Nitratidesulfovibrio vulgaris (strain DSM 19637 / Miyazaki F) (Desulfovibrio vulgaris).